Here is a 135-residue protein sequence, read N- to C-terminus: C-type lectin LmsL (135 aa).

Cystine bridges form between Cys3/Cys14, Cys31/Cys131, Cys38/Cys133, and Cys106/Cys123. The 123-residue stretch at Met10–Gln132 folds into the C-type lectin domain. The Ca(2+) site is built by Gln96, Asp98, Glu104, Asn119, and Asp120. A Galactose-binding motif is present at residues Gln96–Asp98.

The protein belongs to the true venom lectin family. In terms of assembly, homodimer; disulfide-linked. As to expression, expressed by the venom gland.

The protein resides in the secreted. Galactose-binding protein which recognizes specific carbohydrate structures and agglutinates a variety of animal cells by binding to cell-surface glycoproteins and glycolipids. Is a calcium-dependent lectin. Shows high hemagglutinating activity, that is inhibited by lactose, galactose and inositol. This is C-type lectin LmsL from Lachesis stenophrys (Central American bushmaster).